Reading from the N-terminus, the 616-residue chain is Dihydroxy-acid dehydratase (616 aa).

Mg(2+) is bound at residue Asp-81. Cys-122 contacts [2Fe-2S] cluster. 2 residues coordinate Mg(2+): Asp-123 and Lys-124. Lys-124 is subject to N6-carboxylysine. Residue Cys-195 coordinates [2Fe-2S] cluster. Glu-491 is a binding site for Mg(2+). Ser-517 (proton acceptor) is an active-site residue.

The protein belongs to the IlvD/Edd family. Homodimer. Requires [2Fe-2S] cluster as cofactor. Mg(2+) serves as cofactor.

It catalyses the reaction (2R)-2,3-dihydroxy-3-methylbutanoate = 3-methyl-2-oxobutanoate + H2O. It carries out the reaction (2R,3R)-2,3-dihydroxy-3-methylpentanoate = (S)-3-methyl-2-oxopentanoate + H2O. Its pathway is amino-acid biosynthesis; L-isoleucine biosynthesis; L-isoleucine from 2-oxobutanoate: step 3/4. The protein operates within amino-acid biosynthesis; L-valine biosynthesis; L-valine from pyruvate: step 3/4. Functions in the biosynthesis of branched-chain amino acids. Catalyzes the dehydration of (2R,3R)-2,3-dihydroxy-3-methylpentanoate (2,3-dihydroxy-3-methylvalerate) into 2-oxo-3-methylpentanoate (2-oxo-3-methylvalerate) and of (2R)-2,3-dihydroxy-3-methylbutanoate (2,3-dihydroxyisovalerate) into 2-oxo-3-methylbutanoate (2-oxoisovalerate), the penultimate precursor to L-isoleucine and L-valine, respectively. The polypeptide is Dihydroxy-acid dehydratase (Escherichia coli O127:H6 (strain E2348/69 / EPEC)).